Reading from the N-terminus, the 218-residue chain is Alkylmercury lyase (218 aa).

This sequence belongs to the MerB family.

The enzyme catalyses an alkylmercury + H(+) = an alkane + Hg(2+). Cleaves the carbon-mercury bond of organomercurials such as phenylmercuric acetate. One product is Hg(2+), which is subsequently detoxified by the mercuric reductase. The polypeptide is Alkylmercury lyase (Clostridium butyricum).